The primary structure comprises 832 residues: MPLSYQHFRRLLLLDDEAGPLEEELPRLADEDLNRRVAEDLNLGNLNVSIPWTHKVGNFTGLYSSTVPVFNPYWKTPSFPNIHLHQDIIKKCEQFVGPLTVNEKRRLQLIMPARFYPKVTKYLPLDKGIKPYYPEHLVNHYFQTRHYLHTLWKAGILYKRETTHSASFCGSPYSWEQELQHGAESFHQQSSGILSRPPVGSSLQSKHSKSRLGLQSQQGHLARRQQGRSWSIRARIHPTARRPFGVEPSGSGHNTNLASKSASCLYQSPDRKAAYPAVSTFEKHSSSGHAVELHNLPPNSARSQGERPVFPCWWLQFRNSKPCSDYCLSHIVNLLEDWGPCAEHGEHHIRTPRTPARVTGGVFLVDKNPHNTAESRLVVDFSQFSRGNYRVSWPKFAVPNLQSLTNLLSSNLSWLSLDVSAAFYHLPLHPAAMPHLLVGSSGLSRYVARLSSNSRIFNHQRGTMQNLHDYCSRNLYVSLLLLYKTFGRKLHLYSHPIILGFRKIPMGVGLSPFLLAQFTSAICSVVRRAFPHCLAFSYMDDVVLGAKSVSHLESLFTAVTNFLLSLGIHLNPNKTKRWGYSLNFMGYVIGCYGSLPQDHIIQKIKECFRKLPVNRPIDWKVCQRIVGLLGFAAPFTQCGYPALMPLYACIQSRQAFTFSPTYKAFLCQQYLNLYPVARQRPGLCQVFADATPTGWGLVMGHQRMRGTFLAPLPIHTAELLAACFARSRSGANILGTDNSVVLSRKYTSFPWLLGCAANWILRGTSFVYVPSALNPADDPSRGRLGLSRPLLRLPFRPTTGRTSLYADSPSVPSHLPDRVHFASPLHVAWRPP.

The tract at residues 1 to 177 (MPLSYQHFRR…FCGSPYSWEQ (177 aa)) is terminal protein domain (TP). A spacer region spans residues 178–335 (ELQHGAESFH…YCLSHIVNLL (158 aa)). Positions 186–229 (FHQQSSGILSRPPVGSSLQSKHSKSRLGLQSQQGHLARRQQGRS) are disordered. A polymerase/reverse transcriptase domain (RT) region spans residues 336–679 (EDWGPCAEHG…YLNLYPVARQ (344 aa)). Positions 346–589 (EHHIRTPRTP…YSLNFMGYVI (244 aa)) constitute a Reverse transcriptase domain. The Mg(2+) site is built by Asp-418, Asp-540, and Asp-541.

The protein belongs to the hepadnaviridae P protein family.

It catalyses the reaction DNA(n) + a 2'-deoxyribonucleoside 5'-triphosphate = DNA(n+1) + diphosphate. It carries out the reaction Endonucleolytic cleavage to 5'-phosphomonoester.. Its activity is regulated as follows. Activated by host HSP70 and HSP40 in vitro to be able to bind the epsilon loop of the pgRNA. Because deletion of the RNase H region renders the protein partly chaperone-independent, the chaperones may be needed indirectly to relieve occlusion of the RNA-binding site by this domain. Inhibited by several reverse-transcriptase inhibitors: Lamivudine, Adefovir and Entecavir. Functionally, multifunctional enzyme that converts the viral RNA genome into dsDNA in viral cytoplasmic capsids. This enzyme displays a DNA polymerase activity that can copy either DNA or RNA templates, and a ribonuclease H (RNase H) activity that cleaves the RNA strand of RNA-DNA heteroduplexes in a partially processive 3'- to 5'-endonucleasic mode. Neo-synthesized pregenomic RNA (pgRNA) are encapsidated together with the P protein, and reverse-transcribed inside the nucleocapsid. Initiation of reverse-transcription occurs first by binding the epsilon loop on the pgRNA genome, and is initiated by protein priming, thereby the 5'-end of (-)DNA is covalently linked to P protein. Partial (+)DNA is synthesized from the (-)DNA template and generates the relaxed circular DNA (RC-DNA) genome. After budding and infection, the RC-DNA migrates in the nucleus, and is converted into a plasmid-like covalently closed circular DNA (cccDNA). The activity of P protein does not seem to be necessary for cccDNA generation, and is presumably released from (+)DNA by host nuclear DNA repair machinery. The sequence is that of Protein P from Hepatitis B virus genotype D (isolate Germany/1-91/1991) (HBV-D).